The sequence spans 316 residues: Nucleotide-binding protein Sala_2050 (316 aa).

Residue 18–25 (GLSGAGKS) coordinates ATP. A GTP-binding site is contributed by 69–72 (DSRS). A disordered region spans residues 283–316 (GYEPTLTHRNLDSAPQDGLEGKPPSAARASGGAR).

This sequence belongs to the RapZ-like family.

Its function is as follows. Displays ATPase and GTPase activities. The chain is Nucleotide-binding protein Sala_2050 from Sphingopyxis alaskensis (strain DSM 13593 / LMG 18877 / RB2256) (Sphingomonas alaskensis).